The primary structure comprises 123 residues: Small ribosomal subunit protein uS12 (123 aa).

The residue at position 89 (D89) is a 3-methylthioaspartic acid.

This sequence belongs to the universal ribosomal protein uS12 family. As to quaternary structure, part of the 30S ribosomal subunit. Contacts proteins S8 and S17. May interact with IF1 in the 30S initiation complex.

In terms of biological role, with S4 and S5 plays an important role in translational accuracy. Its function is as follows. Interacts with and stabilizes bases of the 16S rRNA that are involved in tRNA selection in the A site and with the mRNA backbone. Located at the interface of the 30S and 50S subunits, it traverses the body of the 30S subunit contacting proteins on the other side and probably holding the rRNA structure together. The combined cluster of proteins S8, S12 and S17 appears to hold together the shoulder and platform of the 30S subunit. This Beijerinckia indica subsp. indica (strain ATCC 9039 / DSM 1715 / NCIMB 8712) protein is Small ribosomal subunit protein uS12.